Consider the following 440-residue polypeptide: Nuclear hormone receptor family member nhr-130 (440 aa).

The segment at residues 34–110 (LYTCQVCALP…VGMDPGRFQF (77 aa)) is a DNA-binding region (nuclear receptor). 2 consecutive NR C4-type zinc fingers follow at residues 37–57 (CQVC…CRAC) and 74–93 (CKKQ…CKKC). An NR LBD domain is found at 184–439 (EKPLIARNNL…FSHPEMFEDT (256 aa)).

This sequence belongs to the nuclear hormone receptor family.

The protein resides in the nucleus. Functionally, orphan nuclear receptor. The polypeptide is Nuclear hormone receptor family member nhr-130 (nhr-130) (Caenorhabditis elegans).